A 125-amino-acid chain; its full sequence is Large ribosomal subunit protein bL12 (125 aa).

The protein belongs to the bacterial ribosomal protein bL12 family. Homodimer. Part of the ribosomal stalk of the 50S ribosomal subunit. Forms a multimeric L10(L12)X complex, where L10 forms an elongated spine to which 2 to 4 L12 dimers bind in a sequential fashion. Binds GTP-bound translation factors.

Its function is as follows. Forms part of the ribosomal stalk which helps the ribosome interact with GTP-bound translation factors. Is thus essential for accurate translation. This chain is Large ribosomal subunit protein bL12, found in Rhizobium leguminosarum bv. trifolii (strain WSM2304).